We begin with the raw amino-acid sequence, 184 residues long: ATP synthase subunit delta (184 aa).

The protein belongs to the ATPase delta chain family. In terms of assembly, F-type ATPases have 2 components, F(1) - the catalytic core - and F(0) - the membrane proton channel. F(1) has five subunits: alpha(3), beta(3), gamma(1), delta(1), epsilon(1). F(0) has three main subunits: a(1), b(2) and c(10-14). The alpha and beta chains form an alternating ring which encloses part of the gamma chain. F(1) is attached to F(0) by a central stalk formed by the gamma and epsilon chains, while a peripheral stalk is formed by the delta and b chains.

The protein localises to the cell membrane. In terms of biological role, f(1)F(0) ATP synthase produces ATP from ADP in the presence of a proton or sodium gradient. F-type ATPases consist of two structural domains, F(1) containing the extramembraneous catalytic core and F(0) containing the membrane proton channel, linked together by a central stalk and a peripheral stalk. During catalysis, ATP synthesis in the catalytic domain of F(1) is coupled via a rotary mechanism of the central stalk subunits to proton translocation. Its function is as follows. This protein is part of the stalk that links CF(0) to CF(1). It either transmits conformational changes from CF(0) to CF(1) or is implicated in proton conduction. This Wolbachia pipientis subsp. Culex pipiens (strain wPip) protein is ATP synthase subunit delta.